The sequence spans 218 residues: Thiamine-phosphate synthase (218 aa).

4-amino-2-methyl-5-(diphosphooxymethyl)pyrimidine is bound by residues Q43–K47 and N78. Residues D79 and D98 each contribute to the Mg(2+) site. Position 117 (S117) interacts with 4-amino-2-methyl-5-(diphosphooxymethyl)pyrimidine. Residue T143 to S145 participates in 2-[(2R,5Z)-2-carboxy-4-methylthiazol-5(2H)-ylidene]ethyl phosphate binding. K146 contributes to the 4-amino-2-methyl-5-(diphosphooxymethyl)pyrimidine binding site. 2-[(2R,5Z)-2-carboxy-4-methylthiazol-5(2H)-ylidene]ethyl phosphate-binding positions include G174 and I194–S195.

Belongs to the thiamine-phosphate synthase family. Requires Mg(2+) as cofactor.

The catalysed reaction is 2-[(2R,5Z)-2-carboxy-4-methylthiazol-5(2H)-ylidene]ethyl phosphate + 4-amino-2-methyl-5-(diphosphooxymethyl)pyrimidine + 2 H(+) = thiamine phosphate + CO2 + diphosphate. It carries out the reaction 2-(2-carboxy-4-methylthiazol-5-yl)ethyl phosphate + 4-amino-2-methyl-5-(diphosphooxymethyl)pyrimidine + 2 H(+) = thiamine phosphate + CO2 + diphosphate. The enzyme catalyses 4-methyl-5-(2-phosphooxyethyl)-thiazole + 4-amino-2-methyl-5-(diphosphooxymethyl)pyrimidine + H(+) = thiamine phosphate + diphosphate. It functions in the pathway cofactor biosynthesis; thiamine diphosphate biosynthesis; thiamine phosphate from 4-amino-2-methyl-5-diphosphomethylpyrimidine and 4-methyl-5-(2-phosphoethyl)-thiazole: step 1/1. Its function is as follows. Condenses 4-methyl-5-(beta-hydroxyethyl)thiazole monophosphate (THZ-P) and 2-methyl-4-amino-5-hydroxymethyl pyrimidine pyrophosphate (HMP-PP) to form thiamine monophosphate (TMP). The sequence is that of Thiamine-phosphate synthase from Lactococcus lactis subsp. cremoris (strain SK11).